The following is a 734-amino-acid chain: Polyribonucleotide nucleotidyltransferase (734 aa).

Mg(2+) is bound by residues Asp505 and Asp511. The KH domain maps to 572–631; it reads PKLTTIQIPVDAIGMVIGKGGETIRSITEETGAEINIEDDGTVTIASASGEGASAALETI. Positions 641 to 715 constitute an S1 motif domain; sequence GTVYSGKVRD…GKTRFALSIK (75 aa).

The protein belongs to the polyribonucleotide nucleotidyltransferase family. It depends on Mg(2+) as a cofactor.

The protein localises to the cytoplasm. The catalysed reaction is RNA(n+1) + phosphate = RNA(n) + a ribonucleoside 5'-diphosphate. Involved in mRNA degradation. Catalyzes the phosphorolysis of single-stranded polyribonucleotides processively in the 3'- to 5'-direction. This is Polyribonucleotide nucleotidyltransferase from Prosthecochloris aestuarii (strain DSM 271 / SK 413).